Consider the following 505-residue polypeptide: Sodium/sialic acid symporter NanT (505 aa).

5 helical membrane-spanning segments follow: residues 9-29 (LNYI…VYFA), 45-65 (IPGW…ITFM), 80-100 (IGQY…IPFF), 128-148 (FMLF…LALM), and 155-175 (PLMI…LGGI). A56 lines the Na(+) pocket. T58 provides a ligand contact to N-acetyl-alpha-neuraminate. Na(+) is bound at residue L59. N-acetyl-alpha-neuraminate-binding residues include S60, T63, Q82, and R135. D182 serves as a coordination point for Na(+). The next 4 helical transmembrane spans lie at 183–203 (VIQG…ICFN), 227–247 (FSWS…FFAS), 280–300 (LVAC…AYYT), and 318–338 (FYVI…AIFA). 5 residues coordinate Na(+): A339, S342, S343, S345, and S346. 4 helical membrane-spanning segments follow: residues 378–398 (TLTV…IMSN), 406–426 (FNSL…LGIF), 435–455 (ALLG…ATDL), and 457–477 (FFFY…LTAP).

This sequence belongs to the sodium:solute symporter (SSF) (TC 2.A.21) family.

It localises to the cell inner membrane. It carries out the reaction N-acetyl-alpha-neuraminate(out) + 2 Na(+)(out) = N-acetyl-alpha-neuraminate(in) + 2 Na(+)(in). In terms of biological role, symporter that uses the Na(+) gradient as the driving force for the uptake of the sialic acid N-acetylneuraminic acid (Neu5Ac). Might play a role in persistence after colonization. The protein is Sodium/sialic acid symporter NanT of Aliivibrio fischeri (strain ATCC 700601 / ES114) (Vibrio fischeri).